A 440-amino-acid chain; its full sequence is MDLRPEIPPASQAGSQVHPGAAAAAAAAASIPVSMAGSLLRAPPLLLRATEKYPRTPKCARCRNHGVVSALKGHKRYCRWKDCMCAKCTLIAERQRVMAAQVALRRQQAQEENEARELQLLYGTAEGLALAAANGIIPPRQNYEVFGPVSNESNSGESNIQKFELFPKTPLPGTVTPHQAAGKSVSTDTESVPGMSSPDMRHGSGSENGDRESIVSSPIAKPLKDGEETPGSISPIGSDSGSDTDKDEQEPSPSSAASRQMNAIDILTRVFPNHKRSVLELVLQGCGKNVVQAIEQILNNSGQAKGPEETWTAERMLQSVQPTMSSTPRPMLPGTMTLSNRSAFSPLQPNAPHFGSDPSTYPLSTHLGLNPLRLAYSAHSRGLAFMAPYSTTGLMPTLGFRPPMDYAFSDLIRDRTLLHKDQSYTNGLYGPLVNNTQEKQ.

Positions 59-106 (CARCRNHGVVSALKGHKRYCRWKDCMCAKCTLIAERQRVMAAQVALRR) form a DNA-binding region, DM. A disordered region spans residues 167-261 (PKTPLPGTVT…SPSSAASRQM (95 aa)). Positions 199–213 (DMRHGSGSENGDRES) are enriched in basic and acidic residues. Residues 229–241 (TPGSISPIGSDSG) show a composition bias toward low complexity. Residues 251–261 (PSPSSAASRQM) show a composition bias toward polar residues. One can recognise a DMA domain in the interval 261–296 (MNAIDILTRVFPNHKRSVLELVLQGCGKNVVQAIEQ).

Belongs to the DMRT family. As to expression, restrictively expressed in brain and developing germ cells, especially in spermatogonia, spermatocytes, spermatids, and sperm cells, and in developing oocytes, including early perinucleolus stage oocyte, late yolk vesicle stage oocyte, and oil drop stage oocyte.

It localises to the nucleus. Functionally, may be involved in sexual development. This is Doublesex- and mab-3-related transcription factor A2 (dmrta2) from Danio rerio (Zebrafish).